We begin with the raw amino-acid sequence, 285 residues long: Bifunctional protein FolD (285 aa).

Residues 164-166 (GRS), serine 193, and isoleucine 234 contribute to the NADP(+) site.

Belongs to the tetrahydrofolate dehydrogenase/cyclohydrolase family. In terms of assembly, homodimer.

The enzyme catalyses (6R)-5,10-methylene-5,6,7,8-tetrahydrofolate + NADP(+) = (6R)-5,10-methenyltetrahydrofolate + NADPH. It catalyses the reaction (6R)-5,10-methenyltetrahydrofolate + H2O = (6R)-10-formyltetrahydrofolate + H(+). It participates in one-carbon metabolism; tetrahydrofolate interconversion. Catalyzes the oxidation of 5,10-methylenetetrahydrofolate to 5,10-methenyltetrahydrofolate and then the hydrolysis of 5,10-methenyltetrahydrofolate to 10-formyltetrahydrofolate. The chain is Bifunctional protein FolD from Desulfovibrio desulfuricans (strain ATCC 27774 / DSM 6949 / MB).